The sequence spans 264 residues: Thymidylate synthase (264 aa).

R21 lines the dUMP pocket. H51 contributes to the (6R)-5,10-methylene-5,6,7,8-tetrahydrofolate binding site. A dUMP-binding site is contributed by 126-127 (RR). The active-site Nucleophile is C146. Residues 166–169 (RSAD), N177, and 207–209 (HIY) each bind dUMP. Position 169 (D169) interacts with (6R)-5,10-methylene-5,6,7,8-tetrahydrofolate. Residue S263 coordinates (6R)-5,10-methylene-5,6,7,8-tetrahydrofolate.

It belongs to the thymidylate synthase family. Bacterial-type ThyA subfamily. Homodimer.

It is found in the cytoplasm. It carries out the reaction dUMP + (6R)-5,10-methylene-5,6,7,8-tetrahydrofolate = 7,8-dihydrofolate + dTMP. The protein operates within pyrimidine metabolism; dTTP biosynthesis. In terms of biological role, catalyzes the reductive methylation of 2'-deoxyuridine-5'-monophosphate (dUMP) to 2'-deoxythymidine-5'-monophosphate (dTMP) while utilizing 5,10-methylenetetrahydrofolate (mTHF) as the methyl donor and reductant in the reaction, yielding dihydrofolate (DHF) as a by-product. This enzymatic reaction provides an intracellular de novo source of dTMP, an essential precursor for DNA biosynthesis. The sequence is that of Thymidylate synthase from Halalkalibacterium halodurans (strain ATCC BAA-125 / DSM 18197 / FERM 7344 / JCM 9153 / C-125) (Bacillus halodurans).